Consider the following 90-residue polypeptide: Small ribosomal subunit protein bS20 (90 aa).

A compositionally biased stretch (basic and acidic residues) spans 1-11 (MANIKSSEKDI). The disordered stretch occupies residues 1–29 (MANIKSSEKDIRRTKRRNAANSQNRSRLR).

The protein belongs to the bacterial ribosomal protein bS20 family.

Its function is as follows. Binds directly to 16S ribosomal RNA. This is Small ribosomal subunit protein bS20 from Leptospira borgpetersenii serovar Hardjo-bovis (strain JB197).